The primary structure comprises 186 residues: ATP synthase subunit b, chloroplastic (186 aa).

The helical transmembrane segment at Leu27–Leu49 threads the bilayer.

It belongs to the ATPase B chain family. As to quaternary structure, F-type ATPases have 2 components, F(1) - the catalytic core - and F(0) - the membrane proton channel. F(1) has five subunits: alpha(3), beta(3), gamma(1), delta(1), epsilon(1). F(0) has four main subunits: a(1), b(1), b'(1) and c(10-14). The alpha and beta chains form an alternating ring which encloses part of the gamma chain. F(1) is attached to F(0) by a central stalk formed by the gamma and epsilon chains, while a peripheral stalk is formed by the delta, b and b' chains.

It localises to the plastid. The protein localises to the chloroplast thylakoid membrane. Its function is as follows. F(1)F(0) ATP synthase produces ATP from ADP in the presence of a proton or sodium gradient. F-type ATPases consist of two structural domains, F(1) containing the extramembraneous catalytic core and F(0) containing the membrane proton channel, linked together by a central stalk and a peripheral stalk. During catalysis, ATP synthesis in the catalytic domain of F(1) is coupled via a rotary mechanism of the central stalk subunits to proton translocation. Functionally, component of the F(0) channel, it forms part of the peripheral stalk, linking F(1) to F(0). This chain is ATP synthase subunit b, chloroplastic, found in Illicium oligandrum (Star anise).